The primary structure comprises 390 residues: 3,5-dihydroxyphenylacetyl-CoA synthase (390 aa).

Residue Cys-173 is part of the active site.

Belongs to the thiolase-like superfamily. Chalcone/stilbene synthases family.

It catalyses the reaction 4 malonyl-CoA + 4 H(+) = (3,5-dihydroxyphenyl)acetyl-CoA + 4 CO2 + 3 CoA + H2O. It functions in the pathway antibiotic biosynthesis; vancomycin biosynthesis. In terms of biological role, involved in the biosynthesis of the nonproteinogenic amino acid monomer (S)-3,5-dihydroxyphenylglycine (Dpg) responsible of the production of vancomycin and teicoplanin antibiotics. Catalyzes the Claisen condensation of four molecules of malonyl-CoA to yield 3,5-dihydroxyphenylacetyl-CoA (DPA-CoA) and three free coenzyme A (CoA). DpgA requires the presence of the dehydratases DpgB and DpgD to facilitate the aromatization of the DPA-S-DgpA or DPA-S-CoA intermediate. The polypeptide is 3,5-dihydroxyphenylacetyl-CoA synthase (Streptomyces toyocaensis).